Here is a 187-residue protein sequence, read N- to C-terminus: Signal peptidase complex catalytic subunit SEC11 (187 aa).

The Cytoplasmic segment spans residues 1-18 (MLSSLSPYMANPRNTLSQ). The chain crosses the membrane as a helical; Signal-anchor for type II membrane protein span at residues 19–39 (VLNFGLVLSSAFMVWKALSVI). Residues 40-187 (TNSASPVVVV…MGLMVMLQRE (148 aa)) lie on the Lumenal side of the membrane. Residues Ser53 and His92 each act as charge relay system in the active site. The N-linked (GlcNAc...) asparagine glycan is linked to Asn125. The Charge relay system role is filled by Asp129. Residues 173-184 (VLLGFMGLMVML) form a C-terminal short (CTS) helix region.

This sequence belongs to the peptidase S26B family. In terms of assembly, component of the signal peptidase complex (SPC) composed of a catalytic subunit SEC11 and three accessory subunits SPC1, SPC2 and SPC3. The complex induces a local thinning of the ER membrane which is used to measure the length of the signal peptide (SP) h-region of protein substrates. This ensures the selectivity of the complex towards h-regions shorter than 18-20 amino acids. SPC associates with the translocon complex.

Its subcellular location is the endoplasmic reticulum membrane. It catalyses the reaction Cleavage of hydrophobic, N-terminal signal or leader sequences from secreted and periplasmic proteins.. In terms of biological role, catalytic component of the signal peptidase complex (SPC) which catalyzes the cleavage of N-terminal signal sequences from nascent proteins as they are translocated into the lumen of the endoplasmic reticulum. Specifically cleaves N-terminal signal peptides that contain a hydrophobic alpha-helix (h-region) shorter than 18-20 amino acids. The protein is Signal peptidase complex catalytic subunit SEC11 (SEC11) of Ajellomyces capsulatus (strain NAm1 / WU24) (Darling's disease fungus).